A 353-amino-acid polypeptide reads, in one-letter code: Protein XRP2 (353 aa).

The disordered stretch occupies residues 1–37; it reads MGCFFSKKAKRKRNSEEEQPQQDGEEPKQYSWDKREK. G2 carries the N-myristoyl glycine lipid modification. Residue C3 is the site of S-palmitoyl cysteine attachment. Over residues 25–37 the composition is skewed to basic and acidic residues; sequence EEPKQYSWDKREK. The C-CAP/cofactor C-like domain maps to 27–182; it reads PKQYSWDKRE…TWSNIHDFTP (156 aa). Residues 101 to 102 and 118 to 121 contribute to the GTP site; these read GS and QQFR.

It belongs to the TBCC family. In terms of processing, myristoylated on Gly-2; which may be required for membrane targeting. Palmitoylated on Cys-3; which may be required for plasma membrane targeting.

The protein localises to the cell membrane. Acts as a GTPase-activating protein (GAP) for tubulin in concert with tubulin-specific chaperone C, but does not enhance tubulin heterodimerization. Acts as a GTPase-activating protein. May act as guanine nucleotide dissociation inhibitor towards ADP-ribosylation factor-like proteins. The polypeptide is Protein XRP2 (rp2) (Xenopus laevis (African clawed frog)).